The following is a 231-amino-acid chain: 5'-methylthioadenosine/S-adenosylhomocysteine nucleosidase (231 aa).

Residue glutamate 12 is the Proton acceptor of the active site. Residues glycine 78, valine 153, and 174-175 each bind substrate; that span reads ME. The active-site Proton donor is the aspartate 198.

The protein belongs to the PNP/UDP phosphorylase family. MtnN subfamily.

It catalyses the reaction S-adenosyl-L-homocysteine + H2O = S-(5-deoxy-D-ribos-5-yl)-L-homocysteine + adenine. It carries out the reaction S-methyl-5'-thioadenosine + H2O = 5-(methylsulfanyl)-D-ribose + adenine. The enzyme catalyses 5'-deoxyadenosine + H2O = 5-deoxy-D-ribose + adenine. It participates in amino-acid biosynthesis; L-methionine biosynthesis via salvage pathway; S-methyl-5-thio-alpha-D-ribose 1-phosphate from S-methyl-5'-thioadenosine (hydrolase route): step 1/2. Functionally, catalyzes the irreversible cleavage of the glycosidic bond in both 5'-methylthioadenosine (MTA) and S-adenosylhomocysteine (SAH/AdoHcy) to adenine and the corresponding thioribose, 5'-methylthioribose and S-ribosylhomocysteine, respectively. Also cleaves 5'-deoxyadenosine, a toxic by-product of radical S-adenosylmethionine (SAM) enzymes, into 5-deoxyribose and adenine. The protein is 5'-methylthioadenosine/S-adenosylhomocysteine nucleosidase of Vibrio atlanticus (strain LGP32) (Vibrio splendidus (strain Mel32)).